The primary structure comprises 459 residues: Exodeoxyribonuclease 7 large subunit (459 aa).

The protein belongs to the XseA family. In terms of assembly, heterooligomer composed of large and small subunits.

It localises to the cytoplasm. The enzyme catalyses Exonucleolytic cleavage in either 5'- to 3'- or 3'- to 5'-direction to yield nucleoside 5'-phosphates.. Its function is as follows. Bidirectionally degrades single-stranded DNA into large acid-insoluble oligonucleotides, which are then degraded further into small acid-soluble oligonucleotides. The protein is Exodeoxyribonuclease 7 large subunit of Pseudomonas fluorescens (strain ATCC BAA-477 / NRRL B-23932 / Pf-5).